The following is a 72-amino-acid chain: NAD(P)H-quinone oxidoreductase subunit O (72 aa).

Belongs to the complex I NdhO subunit family. As to quaternary structure, NDH-1 can be composed of about 15 different subunits; different subcomplexes with different compositions have been identified which probably have different functions.

It is found in the cellular thylakoid membrane. The catalysed reaction is a plastoquinone + NADH + (n+1) H(+)(in) = a plastoquinol + NAD(+) + n H(+)(out). It catalyses the reaction a plastoquinone + NADPH + (n+1) H(+)(in) = a plastoquinol + NADP(+) + n H(+)(out). NDH-1 shuttles electrons from an unknown electron donor, via FMN and iron-sulfur (Fe-S) centers, to quinones in the respiratory and/or the photosynthetic chain. The immediate electron acceptor for the enzyme in this species is believed to be plastoquinone. Couples the redox reaction to proton translocation, and thus conserves the redox energy in a proton gradient. Cyanobacterial NDH-1 also plays a role in inorganic carbon-concentration. In Trichodesmium erythraeum (strain IMS101), this protein is NAD(P)H-quinone oxidoreductase subunit O.